A 353-amino-acid polypeptide reads, in one-letter code: Photosystem II protein D1 (353 aa).

The residue at position 2 (Thr2) is an N-acetylthreonine. Thr2 carries the phosphothreonine modification. 3 consecutive transmembrane segments (helical) span residues 29 to 46 (YIGWFGVLMIPTLLTATS), 118 to 133 (HFLLGVACYMGREWEL), and 142 to 156 (WIAVAYSAPVAAATA). Chlorophyll a is bound at residue His118. Residue Tyr126 coordinates pheophytin a. Residues Asp170 and Glu189 each coordinate [CaMn4O5] cluster. Residues 197–218 (FHMLGVAGVFGGSLFSAMHGSL) traverse the membrane as a helical segment. His198 is a binding site for chlorophyll a. A quinone is bound by residues His215 and 264-265 (SF). Residue His215 coordinates Fe cation. His272 is a Fe cation binding site. A helical membrane pass occupies residues 274 to 288 (FLAAWPVVGIWFTAL). 4 residues coordinate [CaMn4O5] cluster: His332, Glu333, Asp342, and Ala344. Residues 345 to 353 (SVELDSIDG) constitute a propeptide that is removed on maturation.

Belongs to the reaction center PufL/M/PsbA/D family. As to quaternary structure, PSII is composed of 1 copy each of membrane proteins PsbA, PsbB, PsbC, PsbD, PsbE, PsbF, PsbH, PsbI, PsbJ, PsbK, PsbL, PsbM, PsbT, PsbX, PsbY, PsbZ, Psb30/Ycf12, at least 3 peripheral proteins of the oxygen-evolving complex and a large number of cofactors. It forms dimeric complexes. Requires The D1/D2 heterodimer binds P680, chlorophylls that are the primary electron donor of PSII, and subsequent electron acceptors. It shares a non-heme iron and each subunit binds pheophytin, quinone, additional chlorophylls, carotenoids and lipids. D1 provides most of the ligands for the Mn4-Ca-O5 cluster of the oxygen-evolving complex (OEC). There is also a Cl(-1) ion associated with D1 and D2, which is required for oxygen evolution. The PSII complex binds additional chlorophylls, carotenoids and specific lipids. as cofactor. Tyr-161 forms a radical intermediate that is referred to as redox-active TyrZ, YZ or Y-Z. In terms of processing, C-terminally processed by CTPA; processing is essential to allow assembly of the oxygen-evolving complex and thus photosynthetic growth.

The protein localises to the plastid. The protein resides in the chloroplast thylakoid membrane. It catalyses the reaction 2 a plastoquinone + 4 hnu + 2 H2O = 2 a plastoquinol + O2. Functionally, photosystem II (PSII) is a light-driven water:plastoquinone oxidoreductase that uses light energy to abstract electrons from H(2)O, generating O(2) and a proton gradient subsequently used for ATP formation. It consists of a core antenna complex that captures photons, and an electron transfer chain that converts photonic excitation into a charge separation. The D1/D2 (PsbA/PsbD) reaction center heterodimer binds P680, the primary electron donor of PSII as well as several subsequent electron acceptors. This Gnetum parvifolium (Small-leaved jointfir) protein is Photosystem II protein D1.